The following is a 148-amino-acid chain: UPF0134 protein MPN_410 (148 aa).

The protein belongs to the UPF0134 family.

The sequence is that of UPF0134 protein MPN_410 from Mycoplasma pneumoniae (strain ATCC 29342 / M129 / Subtype 1) (Mycoplasmoides pneumoniae).